The primary structure comprises 521 residues: Medium/long-chain-fatty-acid--[acyl-carrier-protein] ligase MbtM (521 aa).

The segment at 146 to 172 (RRCPEPPAPHANPAILQGTAGSTGTPK) is disordered.

The protein belongs to the ATP-dependent AMP-binding enzyme family.

It carries out the reaction a long-chain fatty acid + holo-[ACP] + ATP = a long-chain fatty acyl-[ACP] + AMP + diphosphate. The catalysed reaction is a medium-chain fatty acid + holo-[ACP] + ATP = a medium-chain fatty acyl-[ACP] + AMP + diphosphate. The protein operates within siderophore biosynthesis; mycobactin biosynthesis. Activates lipidic moieties required for mycobactin biosynthesis. Converts medium- to long-chain aliphatic fatty acids into acyl adenylate, which is further transferred on to the phosphopantetheine arm of the carrier protein MbtL. The protein is Medium/long-chain-fatty-acid--[acyl-carrier-protein] ligase MbtM (mbtM) of Mycolicibacterium paratuberculosis (strain ATCC BAA-968 / K-10) (Mycobacterium paratuberculosis).